A 137-amino-acid polypeptide reads, in one-letter code: Large ribosomal subunit protein uL16c (137 aa).

This sequence belongs to the universal ribosomal protein uL16 family. In terms of assembly, part of the 50S ribosomal subunit.

It localises to the plastid. The chain is Large ribosomal subunit protein uL16c from Cuscuta reflexa (Southern Asian dodder).